The chain runs to 426 residues: Gamma-glutamyl phosphate reductase (426 aa).

Belongs to the gamma-glutamyl phosphate reductase family.

Its subcellular location is the cytoplasm. The enzyme catalyses L-glutamate 5-semialdehyde + phosphate + NADP(+) = L-glutamyl 5-phosphate + NADPH + H(+). Its pathway is amino-acid biosynthesis; L-proline biosynthesis; L-glutamate 5-semialdehyde from L-glutamate: step 2/2. Catalyzes the NADPH-dependent reduction of L-glutamate 5-phosphate into L-glutamate 5-semialdehyde and phosphate. The product spontaneously undergoes cyclization to form 1-pyrroline-5-carboxylate. The chain is Gamma-glutamyl phosphate reductase from Cupriavidus taiwanensis (strain DSM 17343 / BCRC 17206 / CCUG 44338 / CIP 107171 / LMG 19424 / R1) (Ralstonia taiwanensis (strain LMG 19424)).